The following is a 429-amino-acid chain: Adenylosuccinate synthetase (429 aa).

Residues 12–18 and 40–42 each bind GTP; these read GDEGKGK and GHT. The Proton acceptor role is filled by Asp13. Residues Asp13 and Gly40 each contribute to the Mg(2+) site. IMP is bound by residues 13 to 16, 38 to 41, Thr129, Arg143, Gln223, Thr238, and Arg302; these read DEGK and NAGH. Residue His41 is the Proton donor of the active site. 298-304 provides a ligand contact to substrate; sequence TVTGRPR. GTP is bound by residues Arg304, 330–332, and 412–414; these read KLD and STS.

The protein belongs to the adenylosuccinate synthetase family. As to quaternary structure, homodimer. It depends on Mg(2+) as a cofactor.

Its subcellular location is the cytoplasm. The enzyme catalyses IMP + L-aspartate + GTP = N(6)-(1,2-dicarboxyethyl)-AMP + GDP + phosphate + 2 H(+). The protein operates within purine metabolism; AMP biosynthesis via de novo pathway; AMP from IMP: step 1/2. Functionally, plays an important role in the de novo pathway of purine nucleotide biosynthesis. Catalyzes the first committed step in the biosynthesis of AMP from IMP. The sequence is that of Adenylosuccinate synthetase from Rhodospirillum rubrum (strain ATCC 11170 / ATH 1.1.1 / DSM 467 / LMG 4362 / NCIMB 8255 / S1).